Reading from the N-terminus, the 71-residue chain is Exodeoxyribonuclease 7 small subunit (71 aa).

The protein belongs to the XseB family. As to quaternary structure, heterooligomer composed of large and small subunits.

The protein resides in the cytoplasm. The enzyme catalyses Exonucleolytic cleavage in either 5'- to 3'- or 3'- to 5'-direction to yield nucleoside 5'-phosphates.. In terms of biological role, bidirectionally degrades single-stranded DNA into large acid-insoluble oligonucleotides, which are then degraded further into small acid-soluble oligonucleotides. The chain is Exodeoxyribonuclease 7 small subunit from Streptococcus uberis (strain ATCC BAA-854 / 0140J).